The sequence spans 209 residues: MKNLVVVDHPLIKHKLTIMRDKNTGPKEFRELLREITLLLAYEATRHLKCEEVEVETPITKTIGYRINDKDIVVVPILRAGLVMADGILELLPNASVGHIGIYRDPETLQAVEYYAKLPPLNDDKEVFLLDPMLATGVSSIKAIEILKENGAKKITLVALIAAPEGVEAVEKKYEDVKIYVAALDERLNDHGYIIPGLGDAGDRLFRTK.

Residues Arg79, Arg104, and 131 to 139 (DPMLATGVS) contribute to the 5-phospho-alpha-D-ribose 1-diphosphate site. Residues Ile194 and 199–201 (GDA) each bind uracil. Asp200 lines the 5-phospho-alpha-D-ribose 1-diphosphate pocket.

The protein belongs to the UPRTase family. It depends on Mg(2+) as a cofactor.

The enzyme catalyses UMP + diphosphate = 5-phospho-alpha-D-ribose 1-diphosphate + uracil. The protein operates within pyrimidine metabolism; UMP biosynthesis via salvage pathway; UMP from uracil: step 1/1. Allosterically activated by GTP. Catalyzes the conversion of uracil and 5-phospho-alpha-D-ribose 1-diphosphate (PRPP) to UMP and diphosphate. This is Uracil phosphoribosyltransferase from Thermotoga maritima (strain ATCC 43589 / DSM 3109 / JCM 10099 / NBRC 100826 / MSB8).